The chain runs to 29 residues: Cyclotide mra2 (29 aa).

3 cysteine pairs are disulfide-bonded: Cys4–Cys19, Cys8–Cys21, and Cys13–Cys26.

Post-translationally, this is a cyclic peptide. Contains 3 disulfide bonds.

Its function is as follows. Probably participates in a plant defense mechanism. This Melicytus ramiflorus (Whitey wood) protein is Cyclotide mra2.